A 211-amino-acid chain; its full sequence is Urease accessory protein UreF (211 aa).

The disordered stretch occupies residues 71 to 93 (DDADRETDARTPAPAARHASRSQ).

The protein belongs to the UreF family. In terms of assembly, ureD, UreF and UreG form a complex that acts as a GTP-hydrolysis-dependent molecular chaperone, activating the urease apoprotein by helping to assemble the nickel containing metallocenter of UreC. The UreE protein probably delivers the nickel.

The protein localises to the cytoplasm. Required for maturation of urease via the functional incorporation of the urease nickel metallocenter. This is Urease accessory protein UreF from Mycobacterium tuberculosis (strain ATCC 25177 / H37Ra).